We begin with the raw amino-acid sequence, 86 residues long: Exodeoxyribonuclease 7 small subunit (86 aa).

Positions 64–86 (SNPETVQDKTDTDEPDSNEFSLT) are disordered.

Belongs to the XseB family. In terms of assembly, heterooligomer composed of large and small subunits.

It localises to the cytoplasm. It carries out the reaction Exonucleolytic cleavage in either 5'- to 3'- or 3'- to 5'-direction to yield nucleoside 5'-phosphates.. Functionally, bidirectionally degrades single-stranded DNA into large acid-insoluble oligonucleotides, which are then degraded further into small acid-soluble oligonucleotides. This is Exodeoxyribonuclease 7 small subunit from Akkermansia muciniphila (strain ATCC BAA-835 / DSM 22959 / JCM 33894 / BCRC 81048 / CCUG 64013 / CIP 107961 / Muc).